Here is a 637-residue protein sequence, read N- to C-terminus: 1-deoxy-D-xylulose-5-phosphate synthase (637 aa).

Thiamine diphosphate is bound by residues His-71 and 112–114 (SHA). Residue Asp-144 participates in Mg(2+) binding. Residues 145-146 (GA), Asn-173, Tyr-284, and Glu-365 contribute to the thiamine diphosphate site. Asn-173 serves as a coordination point for Mg(2+).

Belongs to the transketolase family. DXPS subfamily. In terms of assembly, homodimer. Mg(2+) serves as cofactor. The cofactor is thiamine diphosphate.

The catalysed reaction is D-glyceraldehyde 3-phosphate + pyruvate + H(+) = 1-deoxy-D-xylulose 5-phosphate + CO2. Its pathway is metabolic intermediate biosynthesis; 1-deoxy-D-xylulose 5-phosphate biosynthesis; 1-deoxy-D-xylulose 5-phosphate from D-glyceraldehyde 3-phosphate and pyruvate: step 1/1. In terms of biological role, catalyzes the acyloin condensation reaction between C atoms 2 and 3 of pyruvate and glyceraldehyde 3-phosphate to yield 1-deoxy-D-xylulose-5-phosphate (DXP). The protein is 1-deoxy-D-xylulose-5-phosphate synthase of Mycobacterium ulcerans (strain Agy99).